A 593-amino-acid chain; its full sequence is Gamma-humulene synthase (593 aa).

Positions 1–26 (MAQISESVSPSTDLKSTESSITSNRH) are enriched in polar residues. The segment at 1–34 (MAQISESVSPSTDLKSTESSITSNRHGNMWEDDR) is disordered. Residues aspartate 343, aspartate 347, aspartate 488, and glutamate 496 each contribute to the Mg(2+) site. Residues 343 to 347 (DDLYD) carry the DDXXD motif motif.

Belongs to the terpene synthase family. Tpsd subfamily. Mg(2+) is required as a cofactor. Requires K(+) as cofactor.

The protein resides in the cytoplasm. The catalysed reaction is (2E,6E)-farnesyl diphosphate = gamma-humulene + diphosphate. The enzyme catalyses (2E,6E)-farnesyl diphosphate = sibirene + diphosphate. It carries out the reaction (2E,6E)-farnesyl diphosphate = longifolene + diphosphate. It catalyses the reaction (2E,6E)-farnesyl diphosphate = beta-himachalene + diphosphate. The catalysed reaction is (2E,6E)-farnesyl diphosphate = gamma-himachalene + diphosphate. The enzyme catalyses (2E,6E)-farnesyl diphosphate = alpha-himachalene + diphosphate. It participates in terpene metabolism; oleoresin biosynthesis. In terms of biological role, involved in defensive oleoresin formation in conifers in response to insect attack or other injury. Involved in 52 sesquiterpene (C15) olefins biosynthesis. The chain is Gamma-humulene synthase (ag5) from Abies grandis (Grand fir).